The sequence spans 256 residues: Tryptophan synthase alpha chain (256 aa).

Catalysis depends on proton acceptor residues glutamate 45 and aspartate 56.

It belongs to the TrpA family. As to quaternary structure, tetramer of two alpha and two beta chains.

The catalysed reaction is (1S,2R)-1-C-(indol-3-yl)glycerol 3-phosphate + L-serine = D-glyceraldehyde 3-phosphate + L-tryptophan + H2O. The protein operates within amino-acid biosynthesis; L-tryptophan biosynthesis; L-tryptophan from chorismate: step 5/5. Functionally, the alpha subunit is responsible for the aldol cleavage of indoleglycerol phosphate to indole and glyceraldehyde 3-phosphate. In Christiangramia forsetii (strain DSM 17595 / CGMCC 1.15422 / KT0803) (Gramella forsetii), this protein is Tryptophan synthase alpha chain.